The sequence spans 554 residues: Carboxypeptidase Y homolog A (554 aa).

The N-terminal stretch at 1-17 (MRISASTVLLGAASAAS) is a signal peptide. Positions 18–137 (AASFQNQAQH…QLDNFNLRVK (120 aa)) are excised as a propeptide. Intrachain disulfides connect Cys191–Cys431, Cys325–Cys339, Cys349–Cys372, Cys356–Cys365, and Cys394–Cys401. N-linked (GlcNAc...) asparagine glycosylation is present at Asn222. Ser278 is a catalytic residue. Residue Asp470 is part of the active site. N-linked (GlcNAc...) asparagine glycosylation is present at Asn518. The active site involves His529.

Belongs to the peptidase S10 family.

It is found in the vacuole. It catalyses the reaction Release of a C-terminal amino acid with broad specificity.. Functionally, vacuolar carboxypeptidase involved in degradation of small peptides. Digests preferentially peptides containing an aliphatic or hydrophobic residue in P1' position, as well as methionine, leucine or phenylalanine in P1 position of ester substrate. The protein is Carboxypeptidase Y homolog A (cpyA) of Neurospora crassa (strain ATCC 24698 / 74-OR23-1A / CBS 708.71 / DSM 1257 / FGSC 987).